We begin with the raw amino-acid sequence, 133 residues long: Transmembrane protein 60 (133 aa).

4 helical membrane-spanning segments follow: residues 5-25, 35-55, 78-98, and 110-130; these read LAQR…MLVL, WFLI…LLIV, AWYL…CAKL, and FIPL…NVFF.

Its subcellular location is the membrane. This Homo sapiens (Human) protein is Transmembrane protein 60 (TMEM60).